The sequence spans 72 residues: Translation initiation factor IF-1 (72 aa).

The 72-residue stretch at 1-72 folds into the S1-like domain; sequence MAKEDNIEMQ…SKGRIVFRSR (72 aa).

It belongs to the IF-1 family. As to quaternary structure, component of the 30S ribosomal translation pre-initiation complex which assembles on the 30S ribosome in the order IF-2 and IF-3, IF-1 and N-formylmethionyl-tRNA(fMet); mRNA recruitment can occur at any time during PIC assembly.

The protein localises to the cytoplasm. Functionally, one of the essential components for the initiation of protein synthesis. Stabilizes the binding of IF-2 and IF-3 on the 30S subunit to which N-formylmethionyl-tRNA(fMet) subsequently binds. Helps modulate mRNA selection, yielding the 30S pre-initiation complex (PIC). Upon addition of the 50S ribosomal subunit IF-1, IF-2 and IF-3 are released leaving the mature 70S translation initiation complex. The protein is Translation initiation factor IF-1 of Salmonella paratyphi A (strain ATCC 9150 / SARB42).